A 274-amino-acid polypeptide reads, in one-letter code: Formamidopyrimidine-DNA glycosylase (274 aa).

Pro-2 (schiff-base intermediate with DNA) is an active-site residue. Catalysis depends on Glu-3, which acts as the Proton donor. The Proton donor; for beta-elimination activity role is filled by Lys-58. Positions 91, 110, and 152 each coordinate DNA. The FPG-type zinc-finger motif lies at 237–271 (KVYGRKNLPCLVCENKIETVVIAGRHSAFCPHCQP). Arg-261 functions as the Proton donor; for delta-elimination activity in the catalytic mechanism.

It belongs to the FPG family. In terms of assembly, monomer. Zn(2+) is required as a cofactor.

It catalyses the reaction Hydrolysis of DNA containing ring-opened 7-methylguanine residues, releasing 2,6-diamino-4-hydroxy-5-(N-methyl)formamidopyrimidine.. The catalysed reaction is 2'-deoxyribonucleotide-(2'-deoxyribose 5'-phosphate)-2'-deoxyribonucleotide-DNA = a 3'-end 2'-deoxyribonucleotide-(2,3-dehydro-2,3-deoxyribose 5'-phosphate)-DNA + a 5'-end 5'-phospho-2'-deoxyribonucleoside-DNA + H(+). Involved in base excision repair of DNA damaged by oxidation or by mutagenic agents. Acts as a DNA glycosylase that recognizes and removes damaged bases. Has a preference for oxidized purines, such as 7,8-dihydro-8-oxoguanine (8-oxoG). Has AP (apurinic/apyrimidinic) lyase activity and introduces nicks in the DNA strand. Cleaves the DNA backbone by beta-delta elimination to generate a single-strand break at the site of the removed base with both 3'- and 5'-phosphates. This Legionella pneumophila subsp. pneumophila (strain Philadelphia 1 / ATCC 33152 / DSM 7513) protein is Formamidopyrimidine-DNA glycosylase.